The primary structure comprises 62 residues: uncharacterized protein (62 aa).

A coiled-coil region spans residues 26–62 (YELATLYEAMQKENEEQIEQSKNKLERLRKEWIRLNG).

This is an uncharacterized protein from Bacillus subtilis (strain 168).